The sequence spans 207 residues: Protein GET1 (207 aa).

Residues 1–4 (MPSL) are Lumenal-facing. The chain crosses the membrane as a helical span at residues 5-24 (LISVLFLHIAIYIINTIGAS). At 25-110 (TIDSLLWLIY…LFDVAVKALR (86 aa)) the chain is on the cytoplasmic side. The stretch at 44 to 97 (MAREQHQMKLEVVQLKREMNATSSQDEFAKWAKLRRRHDKALEEYEVKNKQFSR) forms a coiled coil. A helical transmembrane segment spans residues 111–131 (WAGTSGLILLLQFWFSKTPIF). The Lumenal segment spans residues 132–155 (TLPPSWIPWQVEWVLSFPRAPMGT). Residues 156-172 (VSIQVWGGACAVMVALV) form a helical membrane-spanning segment. Residues 173 to 207 (GEAIGATVRYLYGSKDSMEAIKVGAGAVEKEKKRQ) lie on the Cytoplasmic side of the membrane.

The protein belongs to the WRB/GET1 family. Interacts with GET3.

The protein localises to the endoplasmic reticulum membrane. In terms of biological role, required for the post-translational delivery of tail-anchored (TA) proteins to the endoplasmic reticulum. Acts as a membrane receptor for soluble GET3, which recognizes and selectively binds the transmembrane domain of TA proteins in the cytosol. This Paracoccidioides lutzii (strain ATCC MYA-826 / Pb01) (Paracoccidioides brasiliensis) protein is Protein GET1.